The sequence spans 120 residues: NAD(P)H-quinone oxidoreductase subunit 3, chloroplastic (120 aa).

The next 3 helical transmembrane spans lie at 9–29 (FFWAFLIISILVPILAFLISG), 64–84 (MFALVFVVFDVETVFLYPWAM), and 88–108 (VLGVSVFIEAFIFVLILIIGL).

Belongs to the complex I subunit 3 family. As to quaternary structure, NDH is composed of at least 16 different subunits, 5 of which are encoded in the nucleus.

The protein resides in the plastid. It localises to the chloroplast thylakoid membrane. The enzyme catalyses a plastoquinone + NADH + (n+1) H(+)(in) = a plastoquinol + NAD(+) + n H(+)(out). The catalysed reaction is a plastoquinone + NADPH + (n+1) H(+)(in) = a plastoquinol + NADP(+) + n H(+)(out). In terms of biological role, NDH shuttles electrons from NAD(P)H:plastoquinone, via FMN and iron-sulfur (Fe-S) centers, to quinones in the photosynthetic chain and possibly in a chloroplast respiratory chain. The immediate electron acceptor for the enzyme in this species is believed to be plastoquinone. Couples the redox reaction to proton translocation, and thus conserves the redox energy in a proton gradient. This chain is NAD(P)H-quinone oxidoreductase subunit 3, chloroplastic, found in Nicotiana tabacum (Common tobacco).